The chain runs to 429 residues: Mannose-6-phosphate isomerase (429 aa).

Zn(2+)-binding residues include Q109, H111, E136, and H281. The active site involves R300.

Belongs to the mannose-6-phosphate isomerase type 1 family. Requires Zn(2+) as cofactor.

It is found in the cytoplasm. The enzyme catalyses D-mannose 6-phosphate = D-fructose 6-phosphate. It functions in the pathway nucleotide-sugar biosynthesis; GDP-alpha-D-mannose biosynthesis; alpha-D-mannose 1-phosphate from D-fructose 6-phosphate: step 1/2. Its function is as follows. Involved in the synthesis of the GDP-mannose and dolichol-phosphate-mannose required for a number of critical mannosyl transfer reactions. This is Mannose-6-phosphate isomerase (PMI1) from Eremothecium gossypii (strain ATCC 10895 / CBS 109.51 / FGSC 9923 / NRRL Y-1056) (Yeast).